Consider the following 741-residue polypeptide: Phosphoribosylformylglycinamidine synthase subunit PurL (741 aa).

Residue His53 is part of the active site. Residues Tyr56 and Lys95 each contribute to the ATP site. Residue Glu97 coordinates Mg(2+). Residues 98-101 and Arg120 contribute to the substrate site; that span reads SHNH. The active-site Proton acceptor is the His99. Asp121 is a Mg(2+) binding site. Residue Gln244 coordinates substrate. A Mg(2+)-binding site is contributed by Asp274. 318–320 serves as a coordination point for substrate; the sequence is ESQ. ATP is bound by residues Asp501 and Gly538. Residue Asn539 participates in Mg(2+) binding. Ser541 serves as a coordination point for substrate.

Belongs to the FGAMS family. As to quaternary structure, monomer. Part of the FGAM synthase complex composed of 1 PurL, 1 PurQ and 2 PurS subunits.

The protein resides in the cytoplasm. The catalysed reaction is N(2)-formyl-N(1)-(5-phospho-beta-D-ribosyl)glycinamide + L-glutamine + ATP + H2O = 2-formamido-N(1)-(5-O-phospho-beta-D-ribosyl)acetamidine + L-glutamate + ADP + phosphate + H(+). Its pathway is purine metabolism; IMP biosynthesis via de novo pathway; 5-amino-1-(5-phospho-D-ribosyl)imidazole from N(2)-formyl-N(1)-(5-phospho-D-ribosyl)glycinamide: step 1/2. Part of the phosphoribosylformylglycinamidine synthase complex involved in the purines biosynthetic pathway. Catalyzes the ATP-dependent conversion of formylglycinamide ribonucleotide (FGAR) and glutamine to yield formylglycinamidine ribonucleotide (FGAM) and glutamate. The FGAM synthase complex is composed of three subunits. PurQ produces an ammonia molecule by converting glutamine to glutamate. PurL transfers the ammonia molecule to FGAR to form FGAM in an ATP-dependent manner. PurS interacts with PurQ and PurL and is thought to assist in the transfer of the ammonia molecule from PurQ to PurL. The protein is Phosphoribosylformylglycinamidine synthase subunit PurL of Limosilactobacillus fermentum (strain NBRC 3956 / LMG 18251) (Lactobacillus fermentum).